Here is a 202-residue protein sequence, read N- to C-terminus: Ribonuclease HII (202 aa).

The 188-residue stretch at 15-202 (QGVAGVDEAG…APIKAFGISA (188 aa)) folds into the RNase H type-2 domain. 3 residues coordinate a divalent metal cation: aspartate 21, glutamate 22, and aspartate 113.

It belongs to the RNase HII family. The cofactor is Mn(2+). Requires Mg(2+) as cofactor.

The protein localises to the cytoplasm. The enzyme catalyses Endonucleolytic cleavage to 5'-phosphomonoester.. Functionally, endonuclease that specifically degrades the RNA of RNA-DNA hybrids. The polypeptide is Ribonuclease HII (Bordetella avium (strain 197N)).